The sequence spans 125 residues: Large-conductance mechanosensitive channel (125 aa).

2 consecutive transmembrane segments (helical) span residues 14–34 (VIDL…VQSL) and 67–87 (GSFL…FLIV).

This sequence belongs to the MscL family. As to quaternary structure, homopentamer.

The protein localises to the cell membrane. In terms of biological role, channel that opens in response to stretch forces in the membrane lipid bilayer. May participate in the regulation of osmotic pressure changes within the cell. In Lactobacillus helveticus (strain DPC 4571), this protein is Large-conductance mechanosensitive channel.